A 140-amino-acid chain; its full sequence is Fluoride-specific ion channel FluC 2 (140 aa).

4 consecutive transmembrane segments (helical) span residues Val-7 to Leu-27, Trp-45 to Val-65, Pro-77 to Ile-97, and Val-106 to Leu-126. Gly-85 and Thr-88 together coordinate Na(+).

Belongs to the fluoride channel Fluc/FEX (TC 1.A.43) family.

The protein resides in the cell membrane. It catalyses the reaction fluoride(in) = fluoride(out). Its activity is regulated as follows. Na(+) is not transported, but it plays an essential structural role and its presence is essential for fluoride channel function. Fluoride-specific ion channel. Important for reducing fluoride concentration in the cell, thus reducing its toxicity. The polypeptide is Fluoride-specific ion channel FluC 2 (Nocardia farcinica (strain IFM 10152)).